The sequence spans 330 residues: Virulence plasmid integrase pGP8-D (330 aa).

The Core-binding (CB) domain occupies 39–124 (FSLFEVIMHW…SYISLTRFLN (86 aa)). The region spanning 152-327 (VKTNAMNRLQ…SREDNASKKM (176 aa)) is the Tyr recombinase domain. Active-site residues include R189, K214, H279, R282, and H305. Y314 acts as the O-(3'-phospho-DNA)-tyrosine intermediate in catalysis.

It belongs to the 'phage' integrase family.

This Chlamydia muridarum (strain MoPn / Nigg) protein is Virulence plasmid integrase pGP8-D.